The sequence spans 317 residues: Olfactory receptor 51Q1 (317 aa).

Topologically, residues 1-27 are extracellular; sequence MSQVTNTTQEGIYFILTDIPGFEASHI. The N-linked (GlcNAc...) asparagine glycan is linked to N6. A helical transmembrane segment spans residues 28-48; the sequence is WISIPVCCLYTISIMGNTTIL. Over 49 to 56 the chain is Cytoplasmic; sequence TVIRTEPS. A helical transmembrane segment spans residues 57–77; that stretch reads VHQRMYLFLSMLALTDLGLTL. The Extracellular portion of the chain corresponds to 78 to 101; it reads TTLPTVMQLLWFNVRRISSEACFA. A disulfide bridge links C99 with C191. Residues 102-122 traverse the membrane as a helical segment; that stretch reads QFFFLHGFSFMESSVLLAMSV. Over 123–141 the chain is Cytoplasmic; the sequence is DCYVAICCPLHYASILTNE. Residues 142–162 form a helical membrane-spanning segment; it reads VIGRTGLAIICCCVLAVLPSL. Residues 163 to 198 lie on the Extracellular side of the membrane; the sequence is FLLKRLPFCHSHLLSRSYCLHQDMIRLVCADIRLNS. A helical membrane pass occupies residues 199–219; that stretch reads WYGFALALLIIIVDPLLIVIS. The Cytoplasmic portion of the chain corresponds to 220–239; sequence YTLILKNILGTATWAERLRA. A helical membrane pass occupies residues 240–260; it reads LNNCLSHILAVLVLYIPMVGV. Residues 261-275 lie on the Extracellular side of the membrane; the sequence is SMTHRFAKHASPLVH. The chain crosses the membrane as a helical span at residues 276–296; that stretch reads VIMANIYLLAPPVMNPIIYSV. Residues 297–317 are Cytoplasmic-facing; that stretch reads KNKQIQWGMLNFLSLKNMHSR.

Belongs to the G-protein coupled receptor 1 family.

It localises to the cell membrane. Odorant receptor. The sequence is that of Olfactory receptor 51Q1 (OR51Q1) from Homo sapiens (Human).